The following is an 872-amino-acid chain: DNA mismatch repair protein MutS (872 aa).

632–639 (GPNMGGKS) contributes to the ATP binding site.

This sequence belongs to the DNA mismatch repair MutS family.

This protein is involved in the repair of mismatches in DNA. It is possible that it carries out the mismatch recognition step. This protein has a weak ATPase activity. The polypeptide is DNA mismatch repair protein MutS (Colwellia psychrerythraea (strain 34H / ATCC BAA-681) (Vibrio psychroerythus)).